A 486-amino-acid chain; its full sequence is MTNLQTGPTTRGLQRFAIPAVCGLIIFLGYYSQYLFNTSADLAPGPLTCRESLIFNILLVCLWLTYYQACTVDPGQYKFPPKEKEDGDNNNKRGGRGPQKAKWCKKCDAPKPPRAHHCRHCARCIPRMDHHCPWTGNCVSLQTFPHFLRFLVYTNAALVYFARLLWTRLYYGLWDQRHVPAYLGPSVGALLGCTMLSIAWFATQFALMVLLVTTVRSWMLGKTMIEEWEAERHETLLARSYDGDDYWGADGHGGFVPVKVEFPYDNGFWSNMAQAMGTNNFLRWFLPVGGGGPKISNDTPWKGTGWEYEENGFNDRVGMWPPPDPEKLRRERAGAGGKWPGARENLNTEKPEVDYYRSSEDMKTAFKRRQQEDLRRRQQRRQHSSEEDEIMAELEEDEGYEQRSRTRSPPQDGRAWMNSEGDTLWDYGVDVDEEENYGYPGQGVSESLPLVKTATGYNDGQGDEDEDVPLAELIRRRKVKSNGVHE.

At 1–15 the chain is on the cytoplasmic side; that stretch reads MTNLQTGPTTRGLQR. The chain crosses the membrane as a helical span at residues 16–36; it reads FAIPAVCGLIIFLGYYSQYLF. Residues 37–51 lie on the Lumenal side of the membrane; that stretch reads NTSADLAPGPLTCRE. A helical membrane pass occupies residues 52 to 72; that stretch reads SLIFNILLVCLWLTYYQACTV. Over 73–146 the chain is Cytoplasmic; the sequence is DPGQYKFPPK…NCVSLQTFPH (74 aa). Positions 81-91 are enriched in basic and acidic residues; sequence PKEKEDGDNNN. Positions 81–101 are disordered; that stretch reads PKEKEDGDNNNKRGGRGPQKA. A DHHC domain is found at 102 to 152; that stretch reads KWCKKCDAPKPPRAHHCRHCARCIPRMDHHCPWTGNCVSLQTFPHFLRFLV. Cysteine 132 acts as the S-palmitoyl cysteine intermediate in catalysis. The helical transmembrane segment at 147–166 threads the bilayer; that stretch reads FLRFLVYTNAALVYFARLLW. Residues 167 to 178 are Lumenal-facing; sequence TRLYYGLWDQRH. Residues 179-201 form a helical membrane-spanning segment; sequence VPAYLGPSVGALLGCTMLSIAWF. Residues 202–486 lie on the Cytoplasmic side of the membrane; sequence ATQFALMVLL…RKVKSNGVHE (285 aa). Residues 314 to 420 form a disordered region; the sequence is NDRVGMWPPP…QDGRAWMNSE (107 aa). 2 stretches are compositionally biased toward basic and acidic residues: residues 324–333 and 346–376; these read DPEKLRRERA and LNTEKPEVDYYRSSEDMKTAFKRRQQEDLRR. Residues 386 to 399 show a composition bias toward acidic residues; sequence EEDEIMAELEEDEG.

This sequence belongs to the DHHC palmitoyltransferase family. PFA4 subfamily.

The protein localises to the endoplasmic reticulum membrane. The catalysed reaction is L-cysteinyl-[protein] + hexadecanoyl-CoA = S-hexadecanoyl-L-cysteinyl-[protein] + CoA. In terms of biological role, mediates the reversible addition of palmitate to target proteins, thereby regulating their membrane association and biological function. This Neurospora crassa (strain ATCC 24698 / 74-OR23-1A / CBS 708.71 / DSM 1257 / FGSC 987) protein is Palmitoyltransferase pfa4.